A 144-amino-acid polypeptide reads, in one-letter code: Large ribosomal subunit protein uL15 (144 aa).

A disordered region spans residues 1 to 52 (MKLHTLKSTPGARVEKHRVGRGHAAGKGKQAGKGQSGQNKRHGHRLGFEGGQ). Over residues 15–26 (EKHRVGRGHAAG) the composition is skewed to basic residues.

The protein belongs to the universal ribosomal protein uL15 family. Part of the 50S ribosomal subunit.

Binds to the 23S rRNA. The chain is Large ribosomal subunit protein uL15 from Mycoplasmopsis agalactiae (strain NCTC 10123 / CIP 59.7 / PG2) (Mycoplasma agalactiae).